We begin with the raw amino-acid sequence, 110 residues long: Large ribosomal subunit protein uL22 (110 aa).

The protein belongs to the universal ribosomal protein uL22 family. Part of the 50S ribosomal subunit.

Functionally, this protein binds specifically to 23S rRNA; its binding is stimulated by other ribosomal proteins, e.g. L4, L17, and L20. It is important during the early stages of 50S assembly. It makes multiple contacts with different domains of the 23S rRNA in the assembled 50S subunit and ribosome. In terms of biological role, the globular domain of the protein is located near the polypeptide exit tunnel on the outside of the subunit, while an extended beta-hairpin is found that lines the wall of the exit tunnel in the center of the 70S ribosome. This Marinomonas sp. (strain MWYL1) protein is Large ribosomal subunit protein uL22.